A 310-amino-acid polypeptide reads, in one-letter code: Ornithine carbamoyltransferase (310 aa).

Residues 57–60, Q84, R108, and 135–138 contribute to the carbamoyl phosphate site; these read STRT and HPCQ. L-ornithine contacts are provided by residues N166, D229, and 233-234; that span reads SM. Carbamoyl phosphate contacts are provided by residues 269–270 and R297; that span reads CL.

Belongs to the aspartate/ornithine carbamoyltransferase superfamily. OTCase family.

It is found in the cytoplasm. It catalyses the reaction carbamoyl phosphate + L-ornithine = L-citrulline + phosphate + H(+). The protein operates within amino-acid biosynthesis; L-arginine biosynthesis; L-arginine from L-ornithine and carbamoyl phosphate: step 1/3. Reversibly catalyzes the transfer of the carbamoyl group from carbamoyl phosphate (CP) to the N(epsilon) atom of ornithine (ORN) to produce L-citrulline. The chain is Ornithine carbamoyltransferase from Thermosynechococcus vestitus (strain NIES-2133 / IAM M-273 / BP-1).